We begin with the raw amino-acid sequence, 1169 residues long: Zinc finger protein 862 (1169 aa).

The 67-residue stretch at 11 to 77 folds into the KRAB 1 domain; that stretch reads VTFDDITVYL…SVQGQRSLLE (67 aa). A TTF-type 1 zinc finger spans residues 135 to 218; the sequence is KPRSIQKSWF…RDPIWAARFR (84 aa). Residues 333–404 enclose the KRAB 2 domain; sequence VVFEDVAVYF…DPNGPKWGKG (72 aa). The TTF-type 2 zinc-finger motif lies at 461-544; the sequence is RPRSIQRSWF…KEDTPHTALV (84 aa).

The protein localises to the nucleus. May be involved in transcriptional regulation. The polypeptide is Zinc finger protein 862 (ZNF862) (Homo sapiens (Human)).